A 260-amino-acid polypeptide reads, in one-letter code: HTH-type transcriptional activator FapR (260 aa).

In terms of domain architecture, HTH araC/xylS-type spans 154-251; that stretch reads ERIVTLLFSD…GVTPKKFEIG (98 aa). 2 consecutive DNA-binding regions (H-T-H motif) follow at residues 171-192 and 218-241; these read SDIA…EQEC and IGMI…KEYY.

In terms of assembly, homodimer.

Positive regulator of the expression of the 987P operon for the fimbrial protein in enterotoxigenic E.coli. The protein is HTH-type transcriptional activator FapR of Escherichia coli.